Here is a 153-residue protein sequence, read N- to C-terminus: MNEEVNKIITLCGKDWAKIGVEFIFLGGKQECENCKIKKTCLKLKEGAKYKIVGLRDGAVQECPLHDEGVVAVEVVELPIIALVDSKIAVEGAKIHYEQRKCDVYDCSMYSLCHPIELNNGETVIVEKVIGDAPEQCRKGHSVIVAELRRAEE.

Belongs to the UPF0179 family.

This Archaeoglobus fulgidus (strain ATCC 49558 / DSM 4304 / JCM 9628 / NBRC 100126 / VC-16) protein is UPF0179 protein AF_2154.